The primary structure comprises 216 residues: MTDSSISPSHPAGLSRALDNFLTRHRIGVWRVVVTFVLASLLFGHSRWDGTWVSPLLLTLGMLGVSLATVGRLWCALYISGRKNNTLVTSGPYSLCRHPLYVCNLLGILGLGAMTESLAVTAVLALAFALMYPAVIRTEDRFLASAFPEFAEYARRTPAFFPRLSLYRGESTWTVHVSSFQRNIADSVWFLGLSVVVESFDLFHDAGVLRAVVTLA.

3 consecutive transmembrane segments (helical) span residues 27–47, 50–70, and 116–136; these read IGVWRVVVTFVLASLLFGHSR, GTWVSPLLLTLGMLGVSLATV, and ESLAVTAVLALAFALMYPAVI.

To A.xylosoxydans NccN.

The protein localises to the cell inner membrane. Functionally, component of the CZC cation-efflux system that confers resistance to cobalt, zinc and cadmium. This is Cobalt-zinc-cadmium resistance protein CzcN (czcN) from Cupriavidus metallidurans (strain ATCC 43123 / DSM 2839 / NBRC 102507 / CH34) (Ralstonia metallidurans).